A 314-amino-acid polypeptide reads, in one-letter code: Small glutamine-rich tetratricopeptide repeat-containing protein alpha (314 aa).

A disordered region spans residues alanine 65–asparagine 99. Over residues methionine 71 to proline 83 the composition is skewed to basic and acidic residues. Threonine 81 carries the post-translational modification Phosphothreonine. Serine 84 carries the post-translational modification Phosphoserine. Residues glutamate 90–asparagine 99 show a composition bias toward basic and acidic residues. TPR repeat units follow at residues alanine 91–asparagine 124, alanine 125–tyrosine 158, and serine 159–asparagine 192. An N6-acetyllysine modification is found at lysine 137. Residues glycine 249 to serine 268 form a disordered region. Position 302 is a phosphoserine (serine 302). Residue threonine 304 is modified to Phosphothreonine. Position 306 is a phosphoserine (serine 306).

It belongs to the SGT family. As to quaternary structure, homodimer. Homooligomer. Interacts with DNAJC5 and DNAJC5B. Interacts (via TPR repeats) with HSP90AA1. Interacts (via Gln-rich region) with SLC2A1. Interacts with HSP90AB1. Interacts (via TPR repeats) with HSPA8/Hsc70; the interaction is direct. Interacts with BAG6 (via ubiquitin-like domain); interaction prevents interaction between BAG6 and RNF126. Forms a multiprotein complex, at least composed of DNAJB12, DNAJB14, HSPA8/Hsc70 and SGTA; interaction with DNAJB14 and HSPA8/Hsc70 is direct. In terms of assembly, (Microbial infection) Interacts with NS1 from parvovirus H-1. In terms of tissue distribution, ubiquitously expressed.

The protein localises to the cytoplasm. The protein resides in the nucleus. In terms of biological role, co-chaperone that binds misfolded and hydrophobic patches-containing client proteins in the cytosol. Mediates their targeting to the endoplasmic reticulum but also regulates their sorting to the proteasome when targeting fails. Functions in tail-anchored/type II transmembrane proteins membrane insertion constituting with ASNA1 and the BAG6 complex a targeting module. Functions upstream of the BAG6 complex and ASNA1, binding more rapidly the transmembrane domain of newly synthesized proteins. It is also involved in the regulation of the endoplasmic reticulum-associated misfolded protein catabolic process via its interaction with BAG6: collaborates with the BAG6 complex to maintain hydrophobic substrates in non-ubiquitinated states. Competes with RNF126 for interaction with BAG6, preventing the ubiquitination of client proteins associated with the BAG6 complex. Binds directly to HSC70 and HSP70 and regulates their ATPase activity. This chain is Small glutamine-rich tetratricopeptide repeat-containing protein alpha (Sgta), found in Rattus norvegicus (Rat).